Consider the following 185-residue polypeptide: Ribosome-recycling factor (185 aa).

Belongs to the RRF family.

Its subcellular location is the cytoplasm. Responsible for the release of ribosomes from messenger RNA at the termination of protein biosynthesis. May increase the efficiency of translation by recycling ribosomes from one round of translation to another. The sequence is that of Ribosome-recycling factor from Trichlorobacter lovleyi (strain ATCC BAA-1151 / DSM 17278 / SZ) (Geobacter lovleyi).